Consider the following 340-residue polypeptide: Hyaluronan and proteoglycan link protein 2 (340 aa).

Positions 1-26 (MPGWLTLPTLCRFLLWAFTIFHKAQG) are cleaved as a signal peptide. One can recognise an Ig-like V-type domain in the interval 34 to 144 (PHYLLPPIHE…EDESVALTLS (111 aa)). Cystine bridges form between Cys57–Cys128, Cys170–Cys240, Cys194–Cys215, Cys265–Cys336, and Cys290–Cys311. Link domains follow at residues 148-242 (VVFP…FCFT) and 245-338 (LAGQ…YCYA).

It belongs to the HAPLN family. As to expression, expressed only in adult brain.

It is found in the secreted. It localises to the extracellular space. Its subcellular location is the extracellular matrix. Its function is as follows. Mediates a firm binding of versican V2 to hyaluronic acid. May play a pivotal role in the formation of the hyaluronan-associated matrix in the central nervous system (CNS) which facilitates neuronal conduction and general structural stabilization. Binds to hyaluronic acid. The polypeptide is Hyaluronan and proteoglycan link protein 2 (HAPLN2) (Homo sapiens (Human)).